The chain runs to 1017 residues: MKLLKPTWVNHNGKPIFSVDIHPDGTKFATGGQGQDSGKVVIWNMSPVLQEDDEKDENIPKMLCQMDNHLACVNCVRWSNSGMYLASGGDDKLIMVWKRATYIGPSTVFGSSGKLANVEQWRCVSILRNHSGDVMDVAWSPHDAWLASCSVDNTVVIWNAVKFPEILATLRGHSGLVKGLTWDPVGKYIASQADDRSLKVWRTLDWQLETSITKPFDECGGTTHVLRLSWSPDGHYLVSAHAMNNSGPTAQIIEREGWKTNMDFVGHRKAVTVVKFNPKIFKKKQKNGSSAKPSCPYCCCAVGSKDRSLSVWLTCLKRPLVVIHELFDKSIMDISWTLNGLGILVCSMDGSVAFLDFSQDELGDPLSEEEKSRIHQSTYGKSLAIMTEAQLSTAVIENPEMLKYQRRQQQQQLDQKSAATREMGSATSVAGVVNGESLEDIRKNLLKKQVETRTADGRRRITPLCIAQLDTGDFSTAFFNSIPLSGSLAGTMLSSHSSPQLLPLDSSTPNSFGASKPCTEPVVAASARPAGDSVNKDSMNATSTPAALSPSVLTTPSKIEPMKAFDSRFTERSKATPGAPALTSMTPTAVERLKEQNLVKELRPRDLLESSSDSDEKVPLAKASSLSKRKLELEVETVEKKKKGRPRKDSRLMPVSLSVQSPAALTAEKEAMCLSAPALALKLPIPSPQRAFTLQVSSDPSMYIEVENEVTVVGGVKLSRLKCNREGKEWETVLTSRILTAAGSCDVVCVACEKRMLSVFSTCGRRLLSPILLPSPISTLHCTGSYVMALTAAATLSVWDVHRQVVVVKEESLHSILAGSDMTVSQILLTQHGIPVMNLSDGKAYCFNPSLSTWNLVSDKQDSLAQCADFRSSLPSQDAMLCSGPLAIIQGRTSNSGRQAARLFSVPHVVQQETTLAYLENQVAAALTLQSSHEYRHWLLVYARYLVNEGFEYRLREICKDLLGPVHYSTGSQWESTVVGLRKRELLKELLPVIGQNLRFQRLFTECQEQLDILRDK.

WD repeat units follow at residues 11 to 53 (HNGK…QEDD) and 68 to 107 (NHLA…GPST). The residue at position 111 (Ser-111) is a Phosphoserine. 5 WD repeats span residues 129–168 (NHSG…EILA), 172–211 (GHSG…LETS), 220–263 (GGTT…TNMD), 266–322 (GHRK…PLVV), and 326–367 (LFDK…DPLS). Residues 421 to 479 (REMGSATSVAGVVNGESLEDIRKNLLKKQVETRTADGRRRITPLCIAQLDTGDFSTAFF) form an interaction with ASF1A region. The interaction with CCNA1 stretch occupies residues 421–729 (REMGSATSVA…RLKCNREGKE (309 aa)). The tract at residues 439-475 (EDIRKNLLKKQVETRTADGRRRITPLCIAQLDTGDFS) is required for repression of histone gene transcription. Low complexity predominate over residues 494–509 (SSHSSPQLLPLDSSTP). The segment at 494 to 555 (SSHSSPQLLP…AALSPSVLTT (62 aa)) is disordered. The segment covering 536 to 555 (KDSMNATSTPAALSPSVLTT) has biased composition (polar residues). Ser-549 carries the phosphoserine modification. Thr-555 carries the post-translational modification Phosphothreonine; by CDK2. Residue Ser-557 is modified to Phosphoserine. 2 disordered regions span residues 570-589 (TERS…TPTA) and 604-625 (PRDL…KASS). Thr-576 carries the phosphothreonine modification. Ser-584 bears the Phosphoserine mark. A Phosphothreonine modification is found at Thr-586. Residues 593–826 (LKEQNLVKEL…LAGSDMTVSQ (234 aa)) form an interaction with histone H2B region. 2 interaction with PAX3 regions span residues 594–739 (KEQN…SRIL) and 740–828 (TAAG…SQIL). The segment covering 604-619 (PRDLLESSSDSDEKVP) has biased composition (basic and acidic residues). Residues Ser-610, Ser-611, Ser-612, Ser-614, Ser-661, Ser-675, and Ser-687 each carry the phosphoserine modification. The interval 738–1017 (ILTAAGSCDV…QEQLDILRDK (280 aa)) is interaction with histone H4.

This sequence belongs to the WD repeat HIR1 family. In terms of assembly, interacts with histone H3-3B, PAX3 and PAX7. Interacts with histone H3.Y. Interacts with CCNA1, HIRIP3, NFU1/HIRIP5 and histone H2B. Part of a complex which includes ASF1A, CABIN1, histone H3.3, histone H4 and UBN1. Post-translationally, sumoylated. In terms of processing, phosphorylated by CDK2/CCNA1 and CDK2/CCNE1 on Thr-555 in vitro. Also phosphorylated on Thr-555 and Ser-687 in vivo. As to expression, expressed at high levels in kidney, pancreas and skeletal muscle and at lower levels in brain, heart, liver, lung, and placenta.

The protein localises to the nucleus. It localises to the PML body. In terms of biological role, cooperates with ASF1A to promote replication-independent chromatin assembly. Required for the periodic repression of histone gene transcription during the cell cycle. Required for the formation of senescence-associated heterochromatin foci (SAHF) and efficient senescence-associated cell cycle exit. The protein is Protein HIRA (HIRA) of Homo sapiens (Human).